A 160-amino-acid polypeptide reads, in one-letter code: 6,7-dimethyl-8-ribityllumazine synthase (160 aa).

5-amino-6-(D-ribitylamino)uracil is bound by residues Phe32, 66–68 (ALE), and 90–92 (CII). 95–96 (ET) serves as a coordination point for (2S)-2-hydroxy-3-oxobutyl phosphate. The active-site Proton donor is the His98. Asn123 is a 5-amino-6-(D-ribitylamino)uracil binding site. A (2S)-2-hydroxy-3-oxobutyl phosphate-binding site is contributed by Arg137.

The protein belongs to the DMRL synthase family.

The enzyme catalyses (2S)-2-hydroxy-3-oxobutyl phosphate + 5-amino-6-(D-ribitylamino)uracil = 6,7-dimethyl-8-(1-D-ribityl)lumazine + phosphate + 2 H2O + H(+). The protein operates within cofactor biosynthesis; riboflavin biosynthesis; riboflavin from 2-hydroxy-3-oxobutyl phosphate and 5-amino-6-(D-ribitylamino)uracil: step 1/2. Its function is as follows. Catalyzes the formation of 6,7-dimethyl-8-ribityllumazine by condensation of 5-amino-6-(D-ribitylamino)uracil with 3,4-dihydroxy-2-butanone 4-phosphate. This is the penultimate step in the biosynthesis of riboflavin. The chain is 6,7-dimethyl-8-ribityllumazine synthase from Methylibium petroleiphilum (strain ATCC BAA-1232 / LMG 22953 / PM1).